The chain runs to 189 residues: Selenoprotein S (189 aa).

A helical transmembrane segment spans residues 28 to 48 (SLLATYGWYIVFSCILLYVVF). Residues 78-90 (RQEALAAARLKMQ) form a VCP/p97-interacting motif (VIM) region. The tract at residues 115–189 (KIEMWDSMQE…RRGPSSGGUG (75 aa)) is disordered. At Ser-140 the chain carries Phosphoserine. The span at 159-173 (RGGGYNPLSGEGGGA) shows a compositional bias: gly residues. Residue Sec-188 is a non-standard amino acid, selenocysteine.

This sequence belongs to the selenoprotein S family. Interacts with DERL1 and (via VIM motif) with VCP, suggesting that it forms a membrane complex with DERL1 that serves as a receptor for VCP. Also interacts with DERL2, DERL3 and SELENOK. The SELENOK-SELENOS complex interacts with VCP. Interacts with CCDC47. Post-translationally, truncated SELENOS proteins produced by failed UGA/Sec decoding are ubiquitinated by the CRL2(KLHDC2) and CRL2(KLHDC3) complexes, which recognizes the glycine (Gly) at the C-terminus of truncated SELENOS proteins. Truncated SELENOS proteins produced by failed UGA/Sec decoding are also ubiquitinated by the CRL5(KLHDC1) complex.

Its subcellular location is the endoplasmic reticulum membrane. It localises to the cytoplasm. In terms of biological role, involved in the degradation process of misfolded endoplasmic reticulum (ER) luminal proteins. Participates in the transfer of misfolded proteins from the ER to the cytosol, where they are destroyed by the proteasome in a ubiquitin-dependent manner. Probably acts by serving as a linker between DERL1, which mediates the retrotranslocation of misfolded proteins into the cytosol, and the ATPase complex VCP, which mediates the translocation and ubiquitination. The chain is Selenoprotein S from Homo sapiens (Human).